The chain runs to 164 residues: MNKEPMSMHGYNKICAELKQLKEVERPNIVKEIDIARGHGDLKENAEYHAAKEKQRFIEARIVDLSEIVANAQVIDPSALAHNKVSFGSTIKILNLDNDKEFSYTIVGSVESDPAKGLISFGSPIAKSLIGKSKGDAVSIQLPNGESDFEILDIYYKEICFDEN.

Belongs to the GreA/GreB family.

Functionally, necessary for efficient RNA polymerase transcription elongation past template-encoded arresting sites. The arresting sites in DNA have the property of trapping a certain fraction of elongating RNA polymerases that pass through, resulting in locked ternary complexes. Cleavage of the nascent transcript by cleavage factors such as GreA or GreB allows the resumption of elongation from the new 3'terminus. GreA releases sequences of 2 to 3 nucleotides. This is Transcription elongation factor GreA from Helicobacter pylori (strain J99 / ATCC 700824) (Campylobacter pylori J99).